The chain runs to 318 residues: Acetyl-coenzyme A carboxylase carboxyl transferase subunit alpha (318 aa).

A CoA carboxyltransferase C-terminal domain is found at 38-292 (KLEKRLAKLE…NKTITKSLHA (255 aa)).

This sequence belongs to the AccA family. As to quaternary structure, acetyl-CoA carboxylase is a heterohexamer composed of biotin carboxyl carrier protein (AccB), biotin carboxylase (AccC) and two subunits each of ACCase subunit alpha (AccA) and ACCase subunit beta (AccD).

The protein localises to the cytoplasm. It catalyses the reaction N(6)-carboxybiotinyl-L-lysyl-[protein] + acetyl-CoA = N(6)-biotinyl-L-lysyl-[protein] + malonyl-CoA. It participates in lipid metabolism; malonyl-CoA biosynthesis; malonyl-CoA from acetyl-CoA: step 1/1. Its function is as follows. Component of the acetyl coenzyme A carboxylase (ACC) complex. First, biotin carboxylase catalyzes the carboxylation of biotin on its carrier protein (BCCP) and then the CO(2) group is transferred by the carboxyltransferase to acetyl-CoA to form malonyl-CoA. In Listeria welshimeri serovar 6b (strain ATCC 35897 / DSM 20650 / CCUG 15529 / CIP 8149 / NCTC 11857 / SLCC 5334 / V8), this protein is Acetyl-coenzyme A carboxylase carboxyl transferase subunit alpha.